The chain runs to 274 residues: Ribosomal RNA small subunit methyltransferase A (274 aa).

Residues Asn-20, Leu-22, Gly-47, Glu-68, Asp-90, and Asn-110 each coordinate S-adenosyl-L-methionine.

It belongs to the class I-like SAM-binding methyltransferase superfamily. rRNA adenine N(6)-methyltransferase family. RsmA subfamily.

It is found in the cytoplasm. The catalysed reaction is adenosine(1518)/adenosine(1519) in 16S rRNA + 4 S-adenosyl-L-methionine = N(6)-dimethyladenosine(1518)/N(6)-dimethyladenosine(1519) in 16S rRNA + 4 S-adenosyl-L-homocysteine + 4 H(+). Specifically dimethylates two adjacent adenosines (A1518 and A1519) in the loop of a conserved hairpin near the 3'-end of 16S rRNA in the 30S particle. May play a critical role in biogenesis of 30S subunits. The protein is Ribosomal RNA small subunit methyltransferase A of Chlorobaculum parvum (strain DSM 263 / NCIMB 8327) (Chlorobium vibrioforme subsp. thiosulfatophilum).